A 362-amino-acid polypeptide reads, in one-letter code: Dihydroorotate dehydrogenase (quinone) (362 aa).

FMN-binding positions include Ala62 to Lys66 and Thr86. Lys66 is a substrate binding site. A substrate-binding site is contributed by Asn111–Phe115. Positions 139 and 170 each coordinate FMN. Asn170 serves as a coordination point for substrate. The active-site Nucleophile is the Ser173. Residue Asn175 participates in substrate binding. FMN-binding residues include Lys215 and Ser243. Asn244 to Thr245 is a substrate binding site. Residues Gly266, Gly295, and Tyr316–Ser317 contribute to the FMN site.

It belongs to the dihydroorotate dehydrogenase family. Type 2 subfamily. As to quaternary structure, monomer. The cofactor is FMN.

Its subcellular location is the cell membrane. The enzyme catalyses (S)-dihydroorotate + a quinone = orotate + a quinol. Its pathway is pyrimidine metabolism; UMP biosynthesis via de novo pathway; orotate from (S)-dihydroorotate (quinone route): step 1/1. Functionally, catalyzes the conversion of dihydroorotate to orotate with quinone as electron acceptor. The sequence is that of Dihydroorotate dehydrogenase (quinone) from Sinorhizobium medicae (strain WSM419) (Ensifer medicae).